We begin with the raw amino-acid sequence, 194 residues long: Peptidyl-tRNA hydrolase (194 aa).

Tyrosine 17 serves as a coordination point for tRNA. The active-site Proton acceptor is histidine 22. 3 residues coordinate tRNA: phenylalanine 68, asparagine 70, and asparagine 116.

Belongs to the PTH family. As to quaternary structure, monomer.

The protein localises to the cytoplasm. It catalyses the reaction an N-acyl-L-alpha-aminoacyl-tRNA + H2O = an N-acyl-L-amino acid + a tRNA + H(+). In terms of biological role, hydrolyzes ribosome-free peptidyl-tRNAs (with 1 or more amino acids incorporated), which drop off the ribosome during protein synthesis, or as a result of ribosome stalling. Catalyzes the release of premature peptidyl moieties from peptidyl-tRNA molecules trapped in stalled 50S ribosomal subunits, and thus maintains levels of free tRNAs and 50S ribosomes. This chain is Peptidyl-tRNA hydrolase, found in Glaesserella parasuis serovar 5 (strain SH0165) (Haemophilus parasuis).